Reading from the N-terminus, the 208-residue chain is Small ribosomal subunit protein uS5 (208 aa).

Polar residues predominate over residues 1–15; the sequence is MTDSNNQSPNKKTSG. A disordered region spans residues 1-54; the sequence is MTDSNNQSPNKKTSGSSSAPPAADGRQENRRSRGEKRGGRRDRRGQERDSEWQE. Basic and acidic residues-rich tracts occupy residues 25–37 and 44–54; these read GRQENRRSRGEKR and RGQERDSEWQE. The S5 DRBM domain occupies 52–115; it reads WQERVVQIRR…ADGKKHLVRV (64 aa).

It belongs to the universal ribosomal protein uS5 family. In terms of assembly, part of the 30S ribosomal subunit. Contacts proteins S4 and S8.

Its function is as follows. With S4 and S12 plays an important role in translational accuracy. Functionally, located at the back of the 30S subunit body where it stabilizes the conformation of the head with respect to the body. In Prochlorococcus marinus (strain NATL2A), this protein is Small ribosomal subunit protein uS5.